A 175-amino-acid chain; its full sequence is Inorganic pyrophosphatase (175 aa).

Substrate-binding residues include Lys30, Arg44, and Tyr56. Asp66, Asp71, and Asp103 together coordinate Mg(2+). Tyr142 is a binding site for substrate.

It belongs to the PPase family. As to quaternary structure, homohexamer. It depends on Mg(2+) as a cofactor.

It localises to the cytoplasm. It carries out the reaction diphosphate + H2O = 2 phosphate + H(+). In terms of biological role, catalyzes the hydrolysis of inorganic pyrophosphate (PPi) forming two phosphate ions. The chain is Inorganic pyrophosphatase from Yersinia pestis.